The following is a 327-amino-acid chain: Methionine import ATP-binding protein MetN (327 aa).

Residues 3–239 (VELKNIEKIY…PKHAVTKELL (237 aa)) enclose the ABC transporter domain. Residue 36–43 (GYSGAGKS) coordinates ATP.

Belongs to the ABC transporter superfamily. Methionine importer (TC 3.A.1.24) family. In terms of assembly, the complex is composed of two ATP-binding proteins (MetN), two transmembrane proteins (MetI) and a solute-binding protein (MetQ).

It is found in the cell inner membrane. It carries out the reaction L-methionine(out) + ATP + H2O = L-methionine(in) + ADP + phosphate + H(+). The catalysed reaction is D-methionine(out) + ATP + H2O = D-methionine(in) + ADP + phosphate + H(+). Functionally, part of the ABC transporter complex MetNIQ involved in methionine import. Responsible for energy coupling to the transport system. This is Methionine import ATP-binding protein MetN from Helicobacter pylori (strain J99 / ATCC 700824) (Campylobacter pylori J99).